The sequence spans 275 residues: MSVRRLAEDTVQPAAFAFSKENAAWAEATIKKYPEGREQSAVIPLLMRAQEQDGWVTRAAIESVADMLGMAYIRVLEVATFYTQFQLQPVGTRAHVQVCGTTPCMLRGAEDLIKICKKKIASEPFTLNEGGTLSWEEVECQGACVNAPMVMIFKDTFEDLTPERLEEIIDRFEAGKGSEVVPGPQIDRVYSAPIGGLTTLQAPEPVEEKKSVRASKAKDEQAVSVPPSNAAKPSTATDVTNPTLKTPATARKAAAKNVKIEGETVDKSKPAKKPR.

The [2Fe-2S] cluster site is built by Cys99, Cys104, Cys140, and Cys144. The interval 200-275 (LQAPEPVEEK…DKSKPAKKPR (76 aa)) is disordered. Residues 206 to 221 (VEEKKSVRASKAKDEQ) are compositionally biased toward basic and acidic residues. The span at 231–242 (AKPSTATDVTNP) shows a compositional bias: polar residues. Over residues 243 to 256 (TLKTPATARKAAAK) the composition is skewed to low complexity. Basic and acidic residues predominate over residues 258-269 (VKIEGETVDKSK).

Belongs to the complex I 24 kDa subunit family. [2Fe-2S] cluster serves as cofactor.

It carries out the reaction a quinone + NADH + 5 H(+)(in) = a quinol + NAD(+) + 4 H(+)(out). In terms of biological role, NDH-1 shuttles electrons from NADH, via FMN and iron-sulfur (Fe-S) centers, to quinones in the respiratory chain. The immediate electron acceptor for the enzyme in this species is believed to be ubiquinone. Couples the redox reaction to proton translocation (for every two electrons transferred, four hydrogen ions are translocated across the cytoplasmic membrane), and thus conserves the redox energy in a proton gradient. The chain is NADH-quinone oxidoreductase subunit E 1 (nuoE1) from Rhizobium meliloti (strain 1021) (Ensifer meliloti).